The chain runs to 392 residues: tRNA (guanine(6)-N2)-methyltransferase (392 aa).

Residues 73–183 (SAIPLLNHFS…DSELFVGVDT (111 aa)) enclose the THUMP domain. S-adenosyl-L-methionine is bound by residues 199 to 203 (HPAHL), 230 to 232 (SGT), Glu275, 303 to 304 (DA), and Asn317.

The protein belongs to the methyltransferase superfamily.

The protein resides in the cytoplasm. It carries out the reaction guanosine(6) in tRNA + S-adenosyl-L-methionine = N(2)-methylguanosine(6) in tRNA + S-adenosyl-L-homocysteine + H(+). S-adenosyl-L-methionine-dependent methyltransferase that catalyzes the methylation of the guanosine nucleotide at position 6 (m2G6) in tRNA. This is tRNA (guanine(6)-N2)-methyltransferase from Archaeoglobus fulgidus (strain ATCC 49558 / DSM 4304 / JCM 9628 / NBRC 100126 / VC-16).